A 238-amino-acid polypeptide reads, in one-letter code: UPF0758 protein Dtpsy_2777 (238 aa).

Residues 116–238 (VFDSPQAVQH…ALSMAEQGLV (123 aa)) enclose the MPN domain. Zn(2+)-binding residues include His187, His189, and Asp200. The JAMM motif motif lies at 187 to 200 (HNHPSGSVQPSRAD).

It belongs to the UPF0758 family.

The chain is UPF0758 protein Dtpsy_2777 from Acidovorax ebreus (strain TPSY) (Diaphorobacter sp. (strain TPSY)).